The sequence spans 772 residues: Endoplasmic reticulum membrane sensor NFE2L1 (772 aa).

Residues 7–24 (YLTEGLLQFTILLSLIGV) form a helical; Signal-anchor for type II membrane protein membrane-spanning segment. Residues 108-148 (DPEGSVSGSQPNSGLALESSSGLQDVTGPDNGVRESETEQG) form a disordered region. Polar residues predominate over residues 113-131 (VSGSQPNSGLALESSSGLQ). The interval 191–199 (VFDYSHRQK) is cholesterol recognition/amino acid consensus (CRAC) region. N-linked (GlcNAc...) asparagine glycans are attached at residues asparagine 348 and asparagine 360. A CPD region spans residues 379-383 (SPEVE). N-linked (GlcNAc...) asparagine glycans are attached at residues asparagine 412 and asparagine 423. Disordered regions lie at residues 470–532 (EEEF…DSET) and 582–613 (SALDSADLPPPSALKKGSKEKQADFLDKQMSR). A Destruction motif motif is present at residues 476 to 480 (DSGLS). Positions 476–523 (DSGLSLDSSHSPSSLSSSEGSSSSSSSSSSSSSSASSSASSSFSEEGA) are enriched in low complexity. Serine 528 carries the post-translational modification Phosphoserine; by CK2. The segment covering 598-613 (GSKEKQADFLDKQMSR) has biased composition (basic and acidic residues). A Phosphoserine; by PKA modification is found at serine 599. A bZIP domain is found at 654–717 (LIRDIRRRGK…RQMKQKVQSL (64 aa)). Positions 656–675 (RDIRRRGKNKMAAQNCRKRK) are basic motif. Residues 682–696 (LERDVEDLQRDKARL) form a leucine-zipper region.

This sequence belongs to the bZIP family. CNC subfamily. As to quaternary structure, interacts with KEAP1. In terms of assembly, interacts (via CPD region) with FBXW7; leading to its ubiquitination and degradation. Interacts with SYVN1/HRD1; leading to its ubiquitination and degradation. Interacts (when ubiquitinated) with DDI2; leading to its cleavage. Interacts (via the bZIP domain) with small MAF protein (MAFF, MAFG or MAFK); required for binding to antioxidant response elements (AREs) on DNA. Interacts (via Destruction motif) with BTRC; leading to its ubiquitination and degradation. Interacts with CEBPB; the heterodimer represses expression of DSPP during odontoblast differentiation. Interacts with MOTS-c, a peptide produced by the mitochondrially encoded 12S rRNA MT-RNR1. Cleaved at Leu-104 by the aspartyl protease DDI2 following retrotranslocation, releasing the protein from the endoplasmic reticulum membrane and forming the transcription factor NRF1 that translocates into the nucleus. Ubiquitination is prerequisite for cleavage by aspartyl protease DDI2. Post-translationally, N-glycosylated in normal conditions, when it has a single-pass type II membrane protein topology, with the DNA-binding domain facing the endoplasmic reticulum lumen. Deglycosylated during retrotranslocation to the cytosolic side of the membrane, to have a single-pass type III membrane protein topology with the major part of the protein facing the cytosol. In terms of processing, ubiquitinated by the SCF(FBXW7) complex and SYVN1/HRD1, leading to its degradation by the proteasome. Ubiquitinated during retrotranslocation to the cytosolic side of the membrane: ubiquitination does not lead to degradation and is required for processing by the aspartyl protease DDI2 and subsequent release from the endoplasmic reticulum membrane. Phosphorylation by CK2 at Ser-528 inhibits transcription factor activity, possibly by affecting DNA-binding activity. Phosphorylation at Ser-599 is required for interaction with CEBPB. Post-translationally, ubiquitinated by the SCF(BTRC) complex in the nucleus, leading to its degradation by the proteasome.

Its subcellular location is the endoplasmic reticulum membrane. It localises to the nucleus. In terms of biological role, endoplasmic reticulum membrane sensor that translocates into the nucleus in response to various stresses to act as a transcription factor. Constitutes a precursor of the transcription factor NRF1. Able to detect various cellular stresses, such as cholesterol excess, oxidative stress or proteasome inhibition. In response to stress, it is released from the endoplasmic reticulum membrane following cleavage by the protease DDI2 and translocates into the nucleus to form the transcription factor NRF1. Acts as a key sensor of cholesterol excess: in excess cholesterol conditions, the endoplasmic reticulum membrane form of the protein directly binds cholesterol via its CRAC motif, preventing cleavage and release of the transcription factor NRF1, thereby allowing expression of genes promoting cholesterol removal, such as CD36. Involved in proteasome homeostasis: in response to proteasome inhibition, it is released from the endoplasmic reticulum membrane, translocates to the nucleus and activates expression of genes encoding proteasome subunits. CNC-type bZIP family transcription factor that translocates to the nucleus and regulates expression of target genes in response to various stresses. Heterodimerizes with small-Maf proteins (MAFF, MAFG or MAFK) and binds DNA motifs including the antioxidant response elements (AREs), which regulate expression of genes involved in oxidative stress response. Activates or represses expression of target genes, depending on the context. Plays a key role in cholesterol homeostasis by acting as a sensor of cholesterol excess: in low cholesterol conditions, translocates into the nucleus and represses expression of genes involved in defense against cholesterol excess, such as CD36. In excess cholesterol conditions, the endoplasmic reticulum membrane form of the protein directly binds cholesterol via its CRAC motif, preventing cleavage and release of the transcription factor NRF1, thereby allowing expression of genes promoting cholesterol removal. Critical for redox balance in response to oxidative stress: acts by binding the AREs motifs on promoters and mediating activation of oxidative stress response genes, such as GCLC, GCLM, GSS, MT1 and MT2. Plays an essential role during fetal liver hematopoiesis: probably has a protective function against oxidative stress and is involved in lipid homeostasis in the liver. Involved in proteasome homeostasis: in response to proteasome inhibition, mediates the 'bounce-back' of proteasome subunits by translocating into the nucleus and activating expression of genes encoding proteasome subunits. Also involved in regulating glucose flux. Together with CEBPB; represses expression of DSPP during odontoblast differentiation. In response to ascorbic acid induction, activates expression of SP7/Osterix in osteoblasts. The polypeptide is Endoplasmic reticulum membrane sensor NFE2L1 (NFE2L1) (Homo sapiens (Human)).